Here is a 175-residue protein sequence, read N- to C-terminus: Small ribosomal subunit protein uS5 (175 aa).

A disordered region spans residues 1-21 (MAKPERNKKPQQAEERDDGMR). In terms of domain architecture, S5 DRBM spans 20–83 (MREKMVAVNR…EEARRKMAKV (64 aa)).

It belongs to the universal ribosomal protein uS5 family. In terms of assembly, part of the 30S ribosomal subunit. Contacts proteins S4 and S8.

In terms of biological role, with S4 and S12 plays an important role in translational accuracy. Its function is as follows. Located at the back of the 30S subunit body where it stabilizes the conformation of the head with respect to the body. The chain is Small ribosomal subunit protein uS5 from Dechloromonas aromatica (strain RCB).